The chain runs to 652 residues: Beta-glucuronidase (652 aa).

Residues methionine 1–alanine 22 form the signal peptide. 2 N-linked (GlcNAc...) asparagine glycosylation sites follow: asparagine 173 and asparagine 420. Glutamate 451 functions as the Proton donor in the catalytic mechanism. N-linked (GlcNAc...) asparagine glycosylation is present at asparagine 631.

The protein belongs to the glycosyl hydrolase 2 family. In terms of assembly, homotetramer.

It localises to the lysosome. The enzyme catalyses a beta-D-glucuronoside + H2O = D-glucuronate + an alcohol. With respect to regulation, inhibited by L-aspartic acid. In terms of biological role, plays an important role in the degradation of dermatan and keratan sulfates. This Sus scrofa (Pig) protein is Beta-glucuronidase (GUSB).